Reading from the N-terminus, the 308-residue chain is HPr kinase/phosphorylase (308 aa).

Residues His138 and Lys159 contribute to the active site. 153–160 (GESGLGKS) serves as a coordination point for ATP. Ser160 contributes to the Mg(2+) binding site. Asp177 functions as the Proton acceptor; for phosphorylation activity. Proton donor; for dephosphorylation activity in the catalytic mechanism. Residues 201 to 210 (LEVRGLGLLD) form an important for the catalytic mechanism of both phosphorylation and dephosphorylation region. Glu202 serves as a coordination point for Mg(2+). The active site involves Arg243. Residues 264–269 (QVAAGR) are important for the catalytic mechanism of dephosphorylation.

It belongs to the HPrK/P family. Homohexamer. Mg(2+) serves as cofactor.

It catalyses the reaction [HPr protein]-L-serine + ATP = [HPr protein]-O-phospho-L-serine + ADP + H(+). It carries out the reaction [HPr protein]-O-phospho-L-serine + phosphate + H(+) = [HPr protein]-L-serine + diphosphate. Functionally, catalyzes the ATP- as well as the pyrophosphate-dependent phosphorylation of a specific serine residue in HPr, a phosphocarrier protein of the phosphoenolpyruvate-dependent sugar phosphotransferase system (PTS). HprK/P also catalyzes the pyrophosphate-producing, inorganic phosphate-dependent dephosphorylation (phosphorolysis) of seryl-phosphorylated HPr (P-Ser-HPr). The chain is HPr kinase/phosphorylase from Bordetella avium (strain 197N).